The chain runs to 1108 residues: Multidrug resistance regulator 1 (1108 aa).

The segment covering 1-19 (MSIATTPIETPKSPKSTEP) has biased composition (polar residues). Residues 1–27 (MSIATTPIETPKSPKSTEPQVRKRKKV) are disordered. A DNA-binding region (zn(2)-C6 fungal-type) is located at residues 31-59 (CTNCRKRKIRCDRQHPCNNCIKSKKHNAC). The segment covering 68–83 (PANFSTNGSSHGNTVP) has biased composition (polar residues). Disordered stretches follow at residues 68–138 (PANF…SENE), 968–990 (DQTYSTSSESSSTPNKDSPLDSR), and 1021–1064 (AQQQ…YYGN). Composition is skewed to basic and acidic residues over residues 86–104 (RPYEESARIPIRFDAEAPR) and 114–123 (NERKNSKKSP). A compositionally biased stretch (polar residues) spans 124–138 (DNTVANNQQTASENE). Residues 134–165 (ASENEVTITLSELNMLKQRLQNIEANINAQSN) are a coiled coil. Low complexity-rich tracts occupy residues 970-980 (TYSTSSESSST) and 1023-1041 (QQRQQESQPFTSSQSQSQS).

It is found in the nucleus. Transcription factor that acts as the central regulator of the MDR1 efflux pump. Other target genes include those encoding oxidoreductases, whose up-regulation in fluconazole-resistant isolates may help to prevent cell damage resulting from the generation of toxic molecules in the presence of fluconazole and thereby contribute to drug resistance. The chain is Multidrug resistance regulator 1 from Candida albicans (strain SC5314 / ATCC MYA-2876) (Yeast).